The following is a 130-amino-acid chain: Protein lgg-2 (130 aa).

Gly130 is lipidated: Phosphatidylethanolamine amidated glycine.

The protein belongs to the ATG8 family. As to quaternary structure, may interact with vps-39. Interacts with lgg-3; the interaction is direct. Interacts with atg-16.1 (via WD domain) and atg-16.2 (via WD 5-6 repeats); the interactions are direct. Interacts with sepa-1 (via the LIR motifs); the interaction is direct. Interacts with sqst-1 (via the LIR motifs); the interaction is direct. Interacts with epg-2 (via the LIR motifs); the interaction is weak. Interacts with atg-7; the interaction is direct. Interacts with atg-3. The interaction with atg-7 and atg-3 may be required for the lipidation of lgg-2. This protein is subject to lipidation. Lipidation is regulated by lgg-1.

The protein localises to the cytoplasmic vesicle. It localises to the autophagosome. Its subcellular location is the cytoplasm. The protein resides in the cell membrane. In terms of biological role, ubiquitin-like modifier involved in the formation of autophagosomal vacuoles (autophagosomes). When lipidated mediates tethering between adjacent membranes and stimulates membrane fusion. Less effective at promoting membrane fusion than lgg-1. Acts upstream of the autophagy protein epg-5 in the aggrephagy pathway, which is the macroautophagic degradation of ubiquitinated protein aggregates, and preferentially interacts with autophagy proteins and substrates containing LIR motifs to mediate autophagosome formation and protein aggregate degradation. In particular binds to components of an atg-5-lgg-3-atg-16 complex to regulate autophagosome formation and cargo sequestration. Required for the degradation of specific sqst-1-containing aggregates during embryogenesis and the early stages of larval development. Involved in allophagy, which is an autophagic process in which paternal mitochondria and organelles are degraded during fertilization, and moreover is required for the degradation of lgg-1-positive allophagic autophagosomes in embryos. Involved in xenophagy, the autophagy-mediated degradation of pathogens and pathogen products, such as toxins. Also plays a role in membrane-pore repair. Through HOPS complex subunit vps-39, tethers lysosomes with autophagosomes to form autolysosomes. Plays a role in the distribution and clearance of germ cell specific P-granules from somatic cells to ensure exclusive localization of the P-granules in germ cells. Essential for dauer development and life-span extension. The protein is Protein lgg-2 of Caenorhabditis elegans.